Here is a 369-residue protein sequence, read N- to C-terminus: Transmembrane protein 144 homolog A (369 aa).

The next 10 membrane-spanning stretches (helical) occupy residues 6 to 26, 35 to 55, 63 to 83, 85 to 105, 122 to 142, 221 to 241, 256 to 276, 288 to 308, 318 to 338, and 347 to 367; these read VIGY…YVPV, LSYA…AMMI, PIGI…IPII, LVGL…VGFF, DWMN…FFFI, VAGI…MIPM, IIFS…MFYA, TVFP…GLMI, GYPI…VFYF, and LLIL…LAFS.

The protein belongs to the TMEM144 family.

It localises to the membrane. The sequence is that of Transmembrane protein 144 homolog A (tmem144A) from Dictyostelium discoideum (Social amoeba).